Consider the following 334-residue polypeptide: N-acetyl-gamma-glutamyl-phosphate reductase (334 aa).

The active site involves Cys154.

This sequence belongs to the NAGSA dehydrogenase family. Type 1 subfamily.

It localises to the cytoplasm. It carries out the reaction N-acetyl-L-glutamate 5-semialdehyde + phosphate + NADP(+) = N-acetyl-L-glutamyl 5-phosphate + NADPH + H(+). It participates in amino-acid biosynthesis; L-arginine biosynthesis; N(2)-acetyl-L-ornithine from L-glutamate: step 3/4. Its function is as follows. Catalyzes the NADPH-dependent reduction of N-acetyl-5-glutamyl phosphate to yield N-acetyl-L-glutamate 5-semialdehyde. This Vibrio vulnificus (strain YJ016) protein is N-acetyl-gamma-glutamyl-phosphate reductase.